Consider the following 414-residue polypeptide: Particulate methane monooxygenase alpha subunit (414 aa).

A signal peptide spans 1–32; it reads MKTIKDRIAKWSAIGLLSAVAATAFYAPSASA. Residues H33, H48, H72, H137, and H139 each coordinate Cu cation. Residues 33–172 form a cupredoxin domain used to construct soluble pmoB (spmoB) region; the sequence is HGEKSQAAFM…MSEFRNPVTT (140 aa). 2 consecutive transmembrane segments (helical) span residues 186–206 and 235–255; these read GNTY…IGYW and VAMG…SSAN. A cupredoxin domain used to construct soluble pmoB (spmoB) region spans residues 265–414; the sequence is QAGTMRGMKP…IDAPLIPSFM (150 aa).

M.capsulatus has two forms of methane monooxygenase, a soluble (sMMO) and a membrane-bound (particulate) type (pMMO). The particulate type is a nonamer composed of three alpha:beta:gamma heterotrimeric protomers assembled into a cylindrical structure; the beta and gamma subunits comprise the bulk of the membrane-spanning regions and the soluble regions are derived primarily from alpha subunits which form two antiparallel beta-barrel-like structures each. This assembly, also called pMMO hydroxylase (pMMO-H), is proposed to associate with methanol dehydrogenase (MDH), also designated as pMMO-R, to form the pMMO-C complex which seems to have greater methane monooxygenase activity. Requires Cu(2+) as cofactor.

It is found in the membrane. The catalysed reaction is methane + a quinol + O2 = methanol + a quinone + H2O. In terms of biological role, methane monooxygenase is responsible for the initial oxygenation of methane to methanol in methanotrophs. At least in vitro, specific quinols can replace NADH as reductants. The protein is Particulate methane monooxygenase alpha subunit (pmoB1) of Methylococcus capsulatus (strain ATCC 33009 / NCIMB 11132 / Bath).